A 188-amino-acid chain; its full sequence is Ion-translocating oxidoreductase complex subunit B (188 aa).

A hydrophobic region spans residues 1–26 (MMSLWIAIGALSTLALVSGVVLGFAA). The region spanning 32-91 (DEDPVVEQVDAILPQSQCGQCGYPGCRPYAEAVSTGGEKINKCAPGGEQVMLKLAELLAV) is the 4Fe-4S domain. 12 residues coordinate [4Fe-4S] cluster: cysteine 49, cysteine 52, cysteine 57, cysteine 74, cysteine 117, cysteine 120, cysteine 123, cysteine 127, cysteine 147, cysteine 150, cysteine 153, and cysteine 157. 4Fe-4S ferredoxin-type domains follow at residues 108–137 (KVAF…GATR) and 138–167 (AMHT…MIPV).

This sequence belongs to the 4Fe4S bacterial-type ferredoxin family. RnfB subfamily. The complex is composed of six subunits: RnfA, RnfB, RnfC, RnfD, RnfE and RnfG. Requires [4Fe-4S] cluster as cofactor.

Its subcellular location is the cell inner membrane. Functionally, part of a membrane-bound complex that couples electron transfer with translocation of ions across the membrane. In Yersinia pestis bv. Antiqua (strain Antiqua), this protein is Ion-translocating oxidoreductase complex subunit B.